Consider the following 2477-residue polypeptide: Spectrin alpha chain, non-erythrocytic 1 (2477 aa).

The segment at 1 to 14 (MDPSGVKVLETAED) is N-terminal domain. Spectrin repeat units lie at residues 45–146 (RFQF…VKLL), 150–251 (KLVQ…QGKL), 256–358 (EVQR…ARLN), 361–465 (YRLQ…QYEQ), 468–570 (DLQL…AQLA), 574–676 (HLQQ…KLRE), 679–781 (QQQQ…QKLA), 785–888 (RLQQ…DLED), 891–969 (QAQQ…ETGK), and 1096–1162 (LFRE…SEGL). The SH3 domain occupies 967–1026 (TGKELVLALYDYQEKSPREVTMKKGDILTLLNSTNKDWWKVEVNDRQGFVPAAYVKKLDP). Tyrosine 1176 is modified (phosphotyrosine). Spectrin repeat units follow at residues 1234-1336 (EVQR…EKLG), 1339-1442 (HDLQ…MMLD), 1446-1549 (ELQL…KLGE), 1552-1661 (TLQQ…KLKE), 1664-1767 (KQQN…KLNE), 1769-1873 (HRLH…RLEE), 1876-1979 (EYQQ…KLDE), 1983-2086 (FLQF…KLLE), 2097-2199 (LFLT…LELQ), and 2211-2315 (LRQE…NLEQ). A C-terminal domain region spans residues 2257–2477 (HQEIRAMRSQ…IEFTRSLFVN (221 aa)). EF-hand domains lie at 2328–2363 (EALK…LGYD), 2371–2406 (EPDP…RETE), and 2409–2444 (KSSE…EQAD). Ca(2+) contacts are provided by aspartate 2341, aspartate 2343, serine 2345, arginine 2347, glutamate 2352, aspartate 2384, asparagine 2386, aspartate 2388, histidine 2390, and glutamate 2395.

It belongs to the spectrin family. In terms of assembly, like erythrocyte spectrin, the spectrin-like proteins are capable of forming dimers which can further associate to tetramers. Interacts with ACP1. Phosphorylation of Tyr-1176 decreases sensitivity to cleavage by calpain in vitro.

The protein resides in the cytoplasm. It is found in the cytoskeleton. It localises to the cell cortex. Functionally, morphologically, spectrin-like proteins appear to be related to spectrin, showing a flexible rod-like structure. They can bind actin but seem to differ in their calmodulin-binding activity. In nonerythroid tissues, spectrins, in association with some other proteins, may play an important role in membrane organization. This Gallus gallus (Chicken) protein is Spectrin alpha chain, non-erythrocytic 1 (SPTAN1).